We begin with the raw amino-acid sequence, 261 residues long: Fructoselysine 6-kinase (261 aa).

The protein belongs to the carbohydrate kinase PfkB family. As to quaternary structure, monomer.

The enzyme catalyses N(6)-(D-fructosyl)-L-lysine + ATP = N(6)-(6-phospho-D-fructosyl)-L-lysine + ADP + H(+). It functions in the pathway carbohydrate metabolism; fructoselysine degradation; D-glucose 6-phosphate and lysine from fructoselysine: step 1/2. Functionally, catalyzes the ATP-dependent phosphorylation of fructoselysine to fructoselysine 6-phosphate. May function in a fructoselysine degradation pathway that allows S.flexneri to grow on fructoselysine or psicoselysine. This chain is Fructoselysine 6-kinase (frlD), found in Shigella flexneri.